The primary structure comprises 433 residues: Eukaryotic translation initiation factor 3 subunit E (433 aa).

Residues 217-390 (FFNHGKGRDL…GHVVMGTQPL (174 aa)) form the PCI domain.

This sequence belongs to the eIF-3 subunit E family. In terms of assembly, component of the eukaryotic translation initiation factor 3 (eIF-3) complex.

The protein localises to the cytoplasm. Component of the eukaryotic translation initiation factor 3 (eIF-3) complex, which is involved in protein synthesis of a specialized repertoire of mRNAs and, together with other initiation factors, stimulates binding of mRNA and methionyl-tRNAi to the 40S ribosome. The eIF-3 complex specifically targets and initiates translation of a subset of mRNAs involved in cell proliferation. The polypeptide is Eukaryotic translation initiation factor 3 subunit E (eIF3-S6) (Anopheles gambiae (African malaria mosquito)).